The following is a 319-amino-acid chain: MSESPETPEPSPAQSPEAAPEQPQAARPVTPGSQASFGTYGGRPVSFVRRGTRLQGRRQQAWEEHSDRWAVDVPRHIANTSVHPDYVFDAEAEFGRSAPLIVEIGSGLGDAVCHAAEENPDWDFLAVEVYTPGLANTVIKINSRKLSNVRVVEANAPEVLATMLPAGSVSEVWVFFPDPWHKSRHHKRRLIQPEFAALVAAALKPGGLFRVATDWSNYAVHVRDVMAGSADFVNLHDGERRGPESPLTQVWQSGVESLVGGAPVKEGRAPVSTEHTGPNEGVDETGGWAPRFEGRIRTSFENKAHEAGRLIFDLCYRRL.

The interval 1 to 44 is disordered; sequence MSESPETPEPSPAQSPEAAPEQPQAARPVTPGSQASFGTYGGRP. Over residues 14-26 the composition is skewed to low complexity; the sequence is QSPEAAPEQPQAA. Residues E103, E128, N155, and D178 each coordinate S-adenosyl-L-methionine. The active site involves D178. Residues K182 and D214 each coordinate substrate. A disordered region spans residues 262–288; it reads APVKEGRAPVSTEHTGPNEGVDETGGW. 298–301 serves as a coordination point for substrate; it reads TSFE.

The protein belongs to the class I-like SAM-binding methyltransferase superfamily. TrmB family.

It carries out the reaction guanosine(46) in tRNA + S-adenosyl-L-methionine = N(7)-methylguanosine(46) in tRNA + S-adenosyl-L-homocysteine. The protein operates within tRNA modification; N(7)-methylguanine-tRNA biosynthesis. In terms of biological role, catalyzes the formation of N(7)-methylguanine at position 46 (m7G46) in tRNA. This chain is tRNA (guanine-N(7)-)-methyltransferase, found in Arthrobacter sp. (strain FB24).